The sequence spans 148 residues: UPF0756 membrane protein KPN78578_11500 (148 aa).

4 helical membrane passes run 14 to 34 (ALGFISHNTTVAISILVLIIV), 51 to 71 (LTVGIIILTIGVMAPIASGTL), 86 to 106 (LLAIAVGVFVSWLGGRGVSLM), and 121 to 141 (VLGVALFRGVPVGPLIAAGII).

Belongs to the UPF0756 family.

The protein localises to the cell membrane. This chain is UPF0756 membrane protein KPN78578_11500, found in Klebsiella pneumoniae subsp. pneumoniae (strain ATCC 700721 / MGH 78578).